We begin with the raw amino-acid sequence, 278 residues long: Large ribosomal subunit protein uL2 (278 aa).

The segment at 223 to 278 (RGSAMNPNDHPHGGGEGKAPVGRKAPMTPWGKKALGVKTRNKKKASTKLIVRRRTK) is disordered. Over residues 261–278 (TRNKKKASTKLIVRRRTK) the composition is skewed to basic residues.

It belongs to the universal ribosomal protein uL2 family. As to quaternary structure, part of the 50S ribosomal subunit. Forms a bridge to the 30S subunit in the 70S ribosome.

In terms of biological role, one of the primary rRNA binding proteins. Required for association of the 30S and 50S subunits to form the 70S ribosome, for tRNA binding and peptide bond formation. It has been suggested to have peptidyltransferase activity; this is somewhat controversial. Makes several contacts with the 16S rRNA in the 70S ribosome. This is Large ribosomal subunit protein uL2 from Spiroplasma kunkelii.